We begin with the raw amino-acid sequence, 365 residues long: Phospho-N-acetylmuramoyl-pentapeptide-transferase (365 aa).

A run of 9 helical transmembrane segments spans residues 19-39 (LLIL…WLLT), 47-67 (AVIL…FGVI), 91-111 (AGTP…VALI), 115-135 (FDPQ…IGWV), 155-175 (LLLQ…TGSP), 184-204 (GNLI…VLVA), 224-244 (AIAF…LMIF), 281-301 (AVGL…IFFV), and 344-364 (TQIV…GFIS).

It belongs to the glycosyltransferase 4 family. MraY subfamily. It depends on Mg(2+) as a cofactor.

The protein localises to the cell inner membrane. It catalyses the reaction UDP-N-acetyl-alpha-D-muramoyl-L-alanyl-gamma-D-glutamyl-meso-2,6-diaminopimeloyl-D-alanyl-D-alanine + di-trans,octa-cis-undecaprenyl phosphate = di-trans,octa-cis-undecaprenyl diphospho-N-acetyl-alpha-D-muramoyl-L-alanyl-D-glutamyl-meso-2,6-diaminopimeloyl-D-alanyl-D-alanine + UMP. It participates in cell wall biogenesis; peptidoglycan biosynthesis. Its function is as follows. Catalyzes the initial step of the lipid cycle reactions in the biosynthesis of the cell wall peptidoglycan: transfers peptidoglycan precursor phospho-MurNAc-pentapeptide from UDP-MurNAc-pentapeptide onto the lipid carrier undecaprenyl phosphate, yielding undecaprenyl-pyrophosphoryl-MurNAc-pentapeptide, known as lipid I. This chain is Phospho-N-acetylmuramoyl-pentapeptide-transferase, found in Gloeothece citriformis (strain PCC 7424) (Cyanothece sp. (strain PCC 7424)).